Consider the following 513-residue polypeptide: ATP synthase subunit alpha 1 (513 aa).

Position 169–176 (169–176 (GDRQTGKT)) interacts with ATP.

Belongs to the ATPase alpha/beta chains family. In terms of assembly, F-type ATPases have 2 components, CF(1) - the catalytic core - and CF(0) - the membrane proton channel. CF(1) has five subunits: alpha(3), beta(3), gamma(1), delta(1), epsilon(1). CF(0) has three main subunits: a(1), b(2) and c(9-12). The alpha and beta chains form an alternating ring which encloses part of the gamma chain. CF(1) is attached to CF(0) by a central stalk formed by the gamma and epsilon chains, while a peripheral stalk is formed by the delta and b chains.

It localises to the cell inner membrane. The catalysed reaction is ATP + H2O + 4 H(+)(in) = ADP + phosphate + 5 H(+)(out). Functionally, produces ATP from ADP in the presence of a proton gradient across the membrane. The alpha chain is a regulatory subunit. This Nitrosomonas eutropha (strain DSM 101675 / C91 / Nm57) protein is ATP synthase subunit alpha 1.